A 345-amino-acid polypeptide reads, in one-letter code: L-threonine 3-dehydrogenase (345 aa).

Cys-38 lines the Zn(2+) pocket. Active-site charge relay system residues include Thr-40 and His-43. The Zn(2+) site is built by His-63, Glu-64, Cys-93, Cys-96, Cys-99, and Cys-107. Residues Ile-176, Asp-196, Arg-201, 263–265 (LGT), and 287–288 (VT) each bind NAD(+).

It belongs to the zinc-containing alcohol dehydrogenase family. As to quaternary structure, homotetramer. Zn(2+) serves as cofactor.

The protein resides in the cytoplasm. It catalyses the reaction L-threonine + NAD(+) = (2S)-2-amino-3-oxobutanoate + NADH + H(+). The protein operates within amino-acid degradation; L-threonine degradation via oxydo-reductase pathway; glycine from L-threonine: step 1/2. In terms of biological role, catalyzes the NAD(+)-dependent oxidation of L-threonine to 2-amino-3-ketobutyrate. The protein is L-threonine 3-dehydrogenase of Cutibacterium acnes (strain DSM 16379 / KPA171202) (Propionibacterium acnes).